A 156-amino-acid chain; its full sequence is Small ribosomal subunit protein uS7 (156 aa).

Belongs to the universal ribosomal protein uS7 family. As to quaternary structure, part of the 30S ribosomal subunit. Contacts proteins S9 and S11.

In terms of biological role, one of the primary rRNA binding proteins, it binds directly to 16S rRNA where it nucleates assembly of the head domain of the 30S subunit. Is located at the subunit interface close to the decoding center, probably blocks exit of the E-site tRNA. The sequence is that of Small ribosomal subunit protein uS7 from Desulfitobacterium hafniense (strain Y51).